The sequence spans 115 residues: Large ribosomal subunit protein uL24 (115 aa).

Belongs to the universal ribosomal protein uL24 family. In terms of assembly, part of the 50S ribosomal subunit.

One of two assembly initiator proteins, it binds directly to the 5'-end of the 23S rRNA, where it nucleates assembly of the 50S subunit. In terms of biological role, one of the proteins that surrounds the polypeptide exit tunnel on the outside of the subunit. The chain is Large ribosomal subunit protein uL24 from Aster yellows witches'-broom phytoplasma (strain AYWB).